We begin with the raw amino-acid sequence, 607 residues long: Glutamine--fructose-6-phosphate aminotransferase [isomerizing] (607 aa).

The active-site Nucleophile; for GATase activity is the Cys-2. The Glutamine amidotransferase type-2 domain maps to 2-218; it reads CGIIGYSGSK…DGDVVLVTKD (217 aa). SIS domains follow at residues 280–424 and 457–597; these read FDEQ…KLGK and IAKK…VDKP. Lys-602 acts as the For Fru-6P isomerization activity in catalysis.

As to quaternary structure, homodimer.

Its subcellular location is the cytoplasm. The catalysed reaction is D-fructose 6-phosphate + L-glutamine = D-glucosamine 6-phosphate + L-glutamate. Catalyzes the first step in hexosamine metabolism, converting fructose-6P into glucosamine-6P using glutamine as a nitrogen source. In Fusobacterium nucleatum subsp. nucleatum (strain ATCC 25586 / DSM 15643 / BCRC 10681 / CIP 101130 / JCM 8532 / KCTC 2640 / LMG 13131 / VPI 4355), this protein is Glutamine--fructose-6-phosphate aminotransferase [isomerizing].